A 287-amino-acid polypeptide reads, in one-letter code: Aromatic amino acid exporter YddG (287 aa).

Residues 1 to 5 lie on the Cytoplasmic side of the membrane; that stretch reads MSRSS. The helical transmembrane segment at 6-24 threads the bilayer; sequence ATLIGFTAILLWSTLALAT. The region spanning 7–136 is the EamA 1 domain; the sequence is TLIGFTAILL…MGLAGTVVLL (130 aa). Residues 25–31 lie on the Periplasmic side of the membrane; it reads SSTGAVP. A helical membrane pass occupies residues 32 to 54; sequence PFLLTALTFTIGGAVGIAAGLAR. The Cytoplasmic portion of the chain corresponds to 55 to 65; sequence GVGLSVLRQPW. A helical transmembrane segment spans residues 66-86; the sequence is PVWVHGIGGLFGYHFFYFSAL. Over 87-90 the chain is Periplasmic; the sequence is KLAP. The helical transmembrane segment at 91–111 threads the bilayer; sequence PAEAGLVAYLWPLLIVLFSAF. The Cytoplasmic portion of the chain corresponds to 112–118; it reads LPGERLR. A helical membrane pass occupies residues 119-139; that stretch reads PAHVAGALMGLAGTVVLLGAR. At 140–149 the chain is on the periplasmic side; that stretch reads AGGFGFAPEY. The chain crosses the membrane as a helical span at residues 150–170; sequence VPGYLAAAACAVIWSVYSVAS. Residues 151 to 281 enclose the EamA 2 domain; that stretch reads PGYLAAAACA…ALIVGGAAVA (131 aa). At 171–176 the chain is on the cytoplasmic side; the sequence is RRFARV. A helical membrane pass occupies residues 177-198; sequence PTEVVAGFCLATAALSALCHIL. The Periplasmic portion of the chain corresponds to 199–208; it reads FEPSVWPVGS. Residues 209 to 233 traverse the membrane as a helical segment; sequence EWLAVVALGIGPVGIAFYTWDIGMK. Residues 234-236 lie on the Cytoplasmic side of the membrane; that stretch reads RGD. A helical membrane pass occupies residues 237-258; sequence VRLLGVLSYAAPVLSTLLLVVA. At 259 to 264 the chain is on the periplasmic side; that stretch reads GFAAPS. The chain crosses the membrane as a helical span at residues 265-284; the sequence is GALAIACALIVGGAAVATLL. At 285–287 the chain is on the cytoplasmic side; it reads ARR.

Belongs to the drug/metabolite transporter (DMT) superfamily. Aromatic amino acid/paraquat exporter (ArAA/P-E) (TC 2.A.7.17) family.

It localises to the cell inner membrane. The catalysed reaction is L-threonine(in) = L-threonine(out). The enzyme catalyses L-methionine(in) = L-methionine(out). It carries out the reaction L-lysine(in) = L-lysine(out). It catalyses the reaction L-glutamate(out) = L-glutamate(in). Its function is as follows. Amino acid transporter with broad substrate specificity. Can transport various amino acids, including L-threonine, L-methionine, L-lysine and L-glutamate. This is Aromatic amino acid exporter YddG from Ancylobacter novellus (strain ATCC 8093 / DSM 506 / JCM 20403 / CCM 1077 / IAM 12100 / NBRC 12443 / NCIMB 10456) (Starkeya novella).